We begin with the raw amino-acid sequence, 69 residues long: Putative F-box protein At2g33705 (69 aa).

Positions 14-59 constitute an F-box domain; it reads GVNLEQIPYDLVLEILLKLSAKSIARFRCVSKLWDSTFRSRYFTEL.

This Arabidopsis thaliana (Mouse-ear cress) protein is Putative F-box protein At2g33705.